A 612-amino-acid chain; its full sequence is Elongation factor 4 (612 aa).

The tr-type G domain occupies 12 to 194; sequence SRIRNFSIIA…QIVEKVPAPS (183 aa). Residues 24 to 29 and 141 to 144 contribute to the GTP site; these read DHGKST and NKID.

It belongs to the TRAFAC class translation factor GTPase superfamily. Classic translation factor GTPase family. LepA subfamily.

It localises to the cell membrane. The enzyme catalyses GTP + H2O = GDP + phosphate + H(+). Its function is as follows. Required for accurate and efficient protein synthesis under certain stress conditions. May act as a fidelity factor of the translation reaction, by catalyzing a one-codon backward translocation of tRNAs on improperly translocated ribosomes. Back-translocation proceeds from a post-translocation (POST) complex to a pre-translocation (PRE) complex, thus giving elongation factor G a second chance to translocate the tRNAs correctly. Binds to ribosomes in a GTP-dependent manner. This is Elongation factor 4 from Bacillus licheniformis (strain ATCC 14580 / DSM 13 / JCM 2505 / CCUG 7422 / NBRC 12200 / NCIMB 9375 / NCTC 10341 / NRRL NRS-1264 / Gibson 46).